The sequence spans 349 residues: Alanine racemase (349 aa).

Lysine 35 acts as the Proton acceptor; specific for D-alanine in catalysis. The residue at position 35 (lysine 35) is an N6-(pyridoxal phosphate)lysine. A substrate-binding site is contributed by arginine 130. The active-site Proton acceptor; specific for L-alanine is the tyrosine 244. Methionine 292 contacts substrate.

The protein belongs to the alanine racemase family. The cofactor is pyridoxal 5'-phosphate.

It carries out the reaction L-alanine = D-alanine. It functions in the pathway amino-acid biosynthesis; D-alanine biosynthesis; D-alanine from L-alanine: step 1/1. Functionally, catalyzes the interconversion of L-alanine and D-alanine. May also act on other amino acids. This Cereibacter sphaeroides (strain KD131 / KCTC 12085) (Rhodobacter sphaeroides) protein is Alanine racemase (alr).